Here is a 286-residue protein sequence, read N- to C-terminus: Probable ketoamine kinase YniA (286 aa).

91–93 (DYL) contributes to the ATP binding site. Residue D193 is the Proton acceptor of the active site.

Belongs to the fructosamine kinase family.

Its function is as follows. Ketoamine kinase that phosphorylates ketoamines on the third carbon of the sugar moiety to generate ketoamine 3-phosphate. This Escherichia coli O157:H7 protein is Probable ketoamine kinase YniA (yniA).